We begin with the raw amino-acid sequence, 104 residues long: Integration host factor subunit beta (104 aa).

Belongs to the bacterial histone-like protein family. In terms of assembly, heterodimer of an alpha and a beta chain.

This protein is one of the two subunits of integration host factor, a specific DNA-binding protein that functions in genetic recombination as well as in transcriptional and translational control. This is Integration host factor subunit beta (ihfB) from Neisseria gonorrhoeae.